A 139-amino-acid chain; its full sequence is Transcription antitermination protein NusB (139 aa).

Belongs to the NusB family.

Functionally, involved in transcription antitermination. Required for transcription of ribosomal RNA (rRNA) genes. Binds specifically to the boxA antiterminator sequence of the ribosomal RNA (rrn) operons. In Cronobacter sakazakii (strain ATCC BAA-894) (Enterobacter sakazakii), this protein is Transcription antitermination protein NusB.